We begin with the raw amino-acid sequence, 489 residues long: WRKY transcription factor 72B (489 aa).

Disordered regions lie at residues 1–100 (MENK…EMRE), 131–159 (QKETDQKSSSTTVNTSTTHHDHESDQEAD), and 234–267 (DENEETSNKNLKTMRNNGDGDDVSQQNPTKRARV). Basic and acidic residues-rich tracts occupy residues 32–52 (GRKEREDDKSKPSSPHHKDYM) and 83–100 (THKEQDDQLASAKDEMRE). Positions 84–132 (HKEQDDQLASAKDEMREVMEENQRLRMHLDRMMKEYRNLQNQFHDIVQK) form a coiled coil. Low complexity predominate over residues 138 to 147 (SSSTTVNTST). The WRKY DNA-binding region spans 273 to 339 (CDAPTMNDGC…YEGTHNHTLP (67 aa)). Disordered stretches follow at residues 356–381 (LLSGSSNSSDPNPQVTATTTTTPTTT) and 427–454 (TSTSSSSPSSLSHLNRMTQNFPPRYNYN). 2 stretches are compositionally biased toward low complexity: residues 371–381 (TATTTTTPTTT) and 427–438 (TSTSSSSPSSLS).

Belongs to the WRKY group II-b family.

The protein localises to the nucleus. Functionally, in association with WRKY72A, contributes to basal defense against root-knot nematodes (RKNs) and potato aphids, as well as Mi-1-mediated gene-for-gene resistance to these pests. Both WRKY72A and WRKY72B are not required for gene-for-gene resistance mediated by Pto, another tomato R gene. The polypeptide is WRKY transcription factor 72B (Solanum lycopersicum (Tomato)).